Here is a 616-residue protein sequence, read N- to C-terminus: Dihydroxy-acid dehydratase (616 aa).

Residue Asp81 coordinates Mg(2+). Position 122 (Cys122) interacts with [2Fe-2S] cluster. Mg(2+) contacts are provided by Asp123 and Lys124. Lys124 is subject to N6-carboxylysine. A [2Fe-2S] cluster-binding site is contributed by Cys195. Glu491 contacts Mg(2+). Catalysis depends on Ser517, which acts as the Proton acceptor.

The protein belongs to the IlvD/Edd family. In terms of assembly, homodimer. Requires [2Fe-2S] cluster as cofactor. Mg(2+) serves as cofactor.

It carries out the reaction (2R)-2,3-dihydroxy-3-methylbutanoate = 3-methyl-2-oxobutanoate + H2O. It catalyses the reaction (2R,3R)-2,3-dihydroxy-3-methylpentanoate = (S)-3-methyl-2-oxopentanoate + H2O. It functions in the pathway amino-acid biosynthesis; L-isoleucine biosynthesis; L-isoleucine from 2-oxobutanoate: step 3/4. It participates in amino-acid biosynthesis; L-valine biosynthesis; L-valine from pyruvate: step 3/4. Functionally, functions in the biosynthesis of branched-chain amino acids. Catalyzes the dehydration of (2R,3R)-2,3-dihydroxy-3-methylpentanoate (2,3-dihydroxy-3-methylvalerate) into 2-oxo-3-methylpentanoate (2-oxo-3-methylvalerate) and of (2R)-2,3-dihydroxy-3-methylbutanoate (2,3-dihydroxyisovalerate) into 2-oxo-3-methylbutanoate (2-oxoisovalerate), the penultimate precursor to L-isoleucine and L-valine, respectively. This is Dihydroxy-acid dehydratase from Salmonella newport (strain SL254).